A 98-amino-acid polypeptide reads, in one-letter code: HssA/B-like protein 36 (98 aa).

Residues 1–29 form a disordered region; sequence MTLFSSISSISNPMTSSKSSISSFGSGTS.

Belongs to the hssA/B family.

This is HssA/B-like protein 36 (hssl36) from Dictyostelium discoideum (Social amoeba).